The sequence spans 380 residues: MAPNLRKSHPLLKMINNSLIDLPTPSNISAWWNFGSLLGICLMTQILTGLLLAMHYTADTTLAFSSVAHTCRNVQYGWLIRNLHANGASFFFICIYLHIGRGFYYGSYLYKETWNTGIILLLTLMATAFVGYVLPWGQMSFWGATVITNLFSAIPYIGQTLVEWAWGGFSVDNPTLTRFFALHFLLPFAIAGLTLIHLTFLHESGSNNPLGIVSNCDKIPFHPYFTLKDILGFALMVLPLTSLALFSPNLLGDPENFTPANPLVTPPHIKPEWYFLFAYAILRSIPNKLGGVLALAASVLVLFLSPFLHKAKQRTMTFRPLSQLLFWILVTNLFILTWVGSQPVEHPFIIIGQLASITYFTILLILFPIIGTLENKMLNF.

4 helical membrane-spanning segments follow: residues Phe34–Met54, Trp78–Ile99, Trp114–Leu134, and Phe179–Thr199. The heme b site is built by His84 and His98. Heme b is bound by residues His183 and His197. His202 serves as a coordination point for a ubiquinone. 4 helical membrane-spanning segments follow: residues Leu227 to Ser247, Leu289 to His309, Leu321 to Ser341, and Phe348 to Pro368.

Belongs to the cytochrome b family. As to quaternary structure, the cytochrome bc1 complex contains 11 subunits: 3 respiratory subunits (MT-CYB, CYC1 and UQCRFS1), 2 core proteins (UQCRC1 and UQCRC2) and 6 low-molecular weight proteins (UQCRH/QCR6, UQCRB/QCR7, UQCRQ/QCR8, UQCR10/QCR9, UQCR11/QCR10 and a cleavage product of UQCRFS1). This cytochrome bc1 complex then forms a dimer. Heme b serves as cofactor.

The protein localises to the mitochondrion inner membrane. Its function is as follows. Component of the ubiquinol-cytochrome c reductase complex (complex III or cytochrome b-c1 complex) that is part of the mitochondrial respiratory chain. The b-c1 complex mediates electron transfer from ubiquinol to cytochrome c. Contributes to the generation of a proton gradient across the mitochondrial membrane that is then used for ATP synthesis. This is Cytochrome b (MT-CYB) from Macronectes giganteus (Southern giant petrel).